A 711-amino-acid chain; its full sequence is Early transcription factor 82 kDa subunit (711 aa).

It belongs to the poxviridae VETF large subunit family. Heterodimer of a 70 kDa and a 82 kDa subunit. Part of the early transcription complex composed of ETF, RAP94, and the DNA-directed RNA polymerase.

Functionally, acts with RNA polymerase to initiate transcription from early gene promoters. Is recruited by the RPO-associated protein of 94 kDa (RAP94) to form the early transcription complex, which also contains the core RNA polymerase. ETF heterodimer binds to early gene promoters. The sequence is that of Early transcription factor 82 kDa subunit (VETFL) from Oryctolagus cuniculus (Rabbit).